Here is a 783-residue protein sequence, read N- to C-terminus: ATP-dependent zinc metalloprotease FtsH (783 aa).

Low complexity predominate over residues 1–16 (MSETPNTNEQNNPNNQ). The interval 1–79 (MSETPNTNEQ…DKEEDFASRL (79 aa)) is disordered. Topologically, residues 1–86 (MSETPNTNEQ…SRLNTRPPQR (86 aa)) are cytoplasmic. A compositionally biased stretch (basic and acidic residues) spans 35–61 (MPERPERHNQADGAPKRPGDDDRKSER). A helical membrane pass occupies residues 87-107 (ASIITIIIIFLVAFFIGSQMM). Residues 108–233 (NMVHGEETDD…EYQVTLPSNV (126 aa)) lie on the Extracellular side of the membrane. Residues 234–254 (TEILISVLPMLLFAGLLIYFF) traverse the membrane as a helical segment. Residues 255–783 (SQMSKANNSQ…APQPPAAPQQ (529 aa)) are Cytoplasmic-facing. 325–332 (GPPGTGKT) is a binding site for ATP. H547 contributes to the Zn(2+) binding site. Residue E548 is part of the active site. Zn(2+) is bound by residues H551 and D623. The span at 738 to 771 (EAAAKAADQAEQPQVEAEPVAQVATPAAPVAPAV) shows a compositional bias: low complexity. Residues 738–783 (EAAAKAADQAEQPQVEAEPVAQVATPAAPVAPAVPEAPQPPAAPQQ) form a disordered region. A compositionally biased stretch (pro residues) spans 772–783 (PEAPQPPAAPQQ).

This sequence in the central section; belongs to the AAA ATPase family. In the C-terminal section; belongs to the peptidase M41 family. Homohexamer. Requires Zn(2+) as cofactor.

It is found in the cell membrane. Functionally, acts as a processive, ATP-dependent zinc metallopeptidase for both cytoplasmic and membrane proteins. Plays a role in the quality control of integral membrane proteins. The sequence is that of ATP-dependent zinc metalloprotease FtsH from Slackia heliotrinireducens (strain ATCC 29202 / DSM 20476 / NCTC 11029 / RHS 1) (Peptococcus heliotrinreducens).